The sequence spans 575 residues: Isocitrate dehydrogenase kinase/phosphatase (575 aa).

Residues 315–321 and lysine 336 contribute to the ATP site; that span reads APGIRGM. The active site involves aspartate 371.

It belongs to the AceK family.

The protein resides in the cytoplasm. It carries out the reaction L-seryl-[isocitrate dehydrogenase] + ATP = O-phospho-L-seryl-[isocitrate dehydrogenase] + ADP + H(+). Bifunctional enzyme which can phosphorylate or dephosphorylate isocitrate dehydrogenase (IDH) on a specific serine residue. This is a regulatory mechanism which enables bacteria to bypass the Krebs cycle via the glyoxylate shunt in response to the source of carbon. When bacteria are grown on glucose, IDH is fully active and unphosphorylated, but when grown on acetate or ethanol, the activity of IDH declines drastically concomitant with its phosphorylation. The sequence is that of Isocitrate dehydrogenase kinase/phosphatase from Citrobacter koseri (strain ATCC BAA-895 / CDC 4225-83 / SGSC4696).